The chain runs to 2727 residues: E3 ubiquitin-protein ligase Ufd4 (2727 aa).

Disordered stretches follow at residues 247–271 (THSSLTAAGTQPTSSSQPAATTNSD) and 365–389 (RGSNNPNQGQLAPRPRRNNTNTDRT). Over residues 365–374 (RGSNNPNQGQ) the composition is skewed to polar residues. ANK repeat units lie at residues 422 to 451 (VGQTLLNWASAFGTLEMVEYLCEKGADVNK), 453 to 482 (QRSSSLHYAACFGRPAIAKILLKFGAYPDL), and 486 to 518 (DGKTPLDKARERLDDGHREVAAILQSPGEWMSP). The interval 682–702 (AQRSSTSVVVAPRPTSDDPME) is disordered. Residues 1322 to 1392 (QIRAQLKHMT…KYDLKLADCE (71 aa)) enclose the MIB/HERC2 domain. Polar residues-rich tracts occupy residues 1401-1430 (QSMGSASTAAKPSEKGGNTLTSRKSSSTPS) and 1437-1448 (KNQNPEGASNQT). 6 disordered regions span residues 1401-1448 (QSMG…SNQT), 1483-1512 (NTSSSREARAKHKESGTNQMHKDNISGPSP), 1570-1592 (ESVTASQSSSHPDVQSSSPREND), 1845-1871 (YPSLSSNNSENIAPSNPSNTSAGQQSA), 1905-1930 (ALLGDLDDEDDMDEDNDEEENEDEYE), and 2092-2115 (STCLESEEFPQTPDVSSKSGASTL). Residues 1575–1592 (SQSSSHPDVQSSSPREND) are compositionally biased toward low complexity. A compositionally biased stretch (acidic residues) spans 1909–1930 (DLDDEDDMDEDNDEEENEDEYE). The segment covering 2104 to 2115 (PDVSSKSGASTL) has biased composition (polar residues). The HECT domain occupies 2289-2727 (RKSVLEVEFL…ATKEKGFHLN (439 aa)). Cys-2696 functions as the Glycyl thioester intermediate in the catalytic mechanism.

Belongs to the UPL family. K-HECT subfamily.

The enzyme catalyses S-ubiquitinyl-[E2 ubiquitin-conjugating enzyme]-L-cysteine + [acceptor protein]-L-lysine = [E2 ubiquitin-conjugating enzyme]-L-cysteine + N(6)-ubiquitinyl-[acceptor protein]-L-lysine.. The protein operates within protein modification; protein ubiquitination. Its function is as follows. E3 ubiquitin-protein ligase which accepts ubiquitin from an E2 ubiquitin-conjugating enzyme in the form of a thioester and then directly transfers the ubiquitin to targeted substrates. Involved in the negative regulation of the Ras/MAPK signaling pathway in the wing by acting with the E2 enzyme Unc6 and the putative E3 ligases poe and Kcmf1 to mediate the ubiquitination and proteasomal degradation of rl/MAPK. The protein is E3 ubiquitin-protein ligase Ufd4 of Drosophila melanogaster (Fruit fly).